A 232-amino-acid chain; its full sequence is MRFPTPLIPATLIKRYKRFLADCRLEDGREITAHCANPGSMMGLAEPGMRVWLEPNDDPKKKLKYGWRLVEHTNGHFTGVDTSVPNRALKAALEAHEIAEFAAYSEVQAEVKYGQNSRIDFLLTDAKLPRCYVEVKSVTLSRQPGLAEFPDSVTARGTKHLRELAAMAEAGHRAVMLYLVQRTDCDRFALAADIDPAYAAEFETAHAKGVERLVIGTTITPEGVKIGDILPS.

It belongs to the SfsA family.

The protein is Sugar fermentation stimulation protein homolog of Ruegeria sp. (strain TM1040) (Silicibacter sp.).